The sequence spans 181 residues: CASP-like protein 5A1 (181 aa).

The Cytoplasmic portion of the chain corresponds to 1-38; sequence MFASRPVVHPLEVAAPAHPVQQPAPGVLMKDLPGMPGT. The helical transmembrane segment at 39–59 threads the bilayer; it reads PGGLGLRVLQLLFAAISLAVM. At 60 to 77 the chain is on the extracellular side; it reads SSTADFASVSAFCYLITT. A helical transmembrane segment spans residues 78–98; the sequence is TVLQCVWSLTVAIVDIYALLV. Over 99 to 115 the chain is Cytoplasmic; that stretch reads KRCLQNRRAVTLFSIGD. Residues 116–136 traverse the membrane as a helical segment; that stretch reads GITWLVSFSGACAAAGIPVLI. Residues 137–153 are Extracellular-facing; the sequence is DADLIMCSENPCASFQT. A helical transmembrane segment spans residues 154-174; that stretch reads AVAMGFMCCFSLLPSFLLNFY. The Cytoplasmic portion of the chain corresponds to 175 to 181; sequence SIASSHG.

The protein belongs to the Casparian strip membrane proteins (CASP) family. In terms of assembly, homodimer and heterodimers.

Its subcellular location is the cell membrane. The sequence is that of CASP-like protein 5A1 from Zea mays (Maize).